We begin with the raw amino-acid sequence, 180 residues long: Shikimate kinase (180 aa).

An ATP-binding site is contributed by Gly-14–Cys-19. A Mg(2+)-binding site is contributed by Ser-18. Substrate is bound by residues Asp-36, Arg-60, and Gly-82. Arg-120 lines the ATP pocket. Arg-139 is a substrate binding site.

This sequence belongs to the shikimate kinase family. In terms of assembly, monomer. Requires Mg(2+) as cofactor.

The protein resides in the cytoplasm. The enzyme catalyses shikimate + ATP = 3-phosphoshikimate + ADP + H(+). The protein operates within metabolic intermediate biosynthesis; chorismate biosynthesis; chorismate from D-erythrose 4-phosphate and phosphoenolpyruvate: step 5/7. Functionally, catalyzes the specific phosphorylation of the 3-hydroxyl group of shikimic acid using ATP as a cosubstrate. The protein is Shikimate kinase of Xanthomonas axonopodis pv. citri (strain 306).